A 205-amino-acid chain; its full sequence is Outer-membrane lipoprotein LolB (205 aa).

The first 17 residues, 1 to 17, serve as a signal peptide directing secretion; sequence MFLRHVIVFSFIALLAG. Cysteine 18 carries N-palmitoyl cysteine lipidation. Cysteine 18 carries S-diacylglycerol cysteine lipidation.

Belongs to the LolB family. Monomer.

The protein localises to the cell outer membrane. Plays a critical role in the incorporation of lipoproteins in the outer membrane after they are released by the LolA protein. In Pseudomonas fluorescens (strain Pf0-1), this protein is Outer-membrane lipoprotein LolB.